A 430-amino-acid chain; its full sequence is Tektin-2 (430 aa).

2 coiled-coil regions span residues 81 to 162 (CLTD…FEKL) and 265 to 379 (FRKR…DIAC).

This sequence belongs to the tektin family. As to quaternary structure, microtubule inner protein component of sperm flagellar doublet microtubules. May interact with CCDC172. In terms of processing, tyrosine phosphorylated. Ubiquitinated, leading to its degradation. Deubiquitinated by USP16, promoting its stability. Expressed in trachea multiciliated cells.

Its subcellular location is the cytoplasm. It is found in the cytoskeleton. It localises to the cilium axoneme. The protein resides in the flagellum axoneme. The protein localises to the microtubule organizing center. Microtubule inner protein (MIP) part of the dynein-decorated doublet microtubules (DMTs) in cilia and flagellar axoneme. Plays a key role in the assembly or attachment of the inner dynein arm to microtubules in sperm flagella and tracheal cilia. Forms filamentous polymers in the walls of ciliary and flagellar microtubules. In Bos taurus (Bovine), this protein is Tektin-2 (TEKT2).